A 344-amino-acid polypeptide reads, in one-letter code: Dihydroorotase (344 aa).

Zn(2+) contacts are provided by His-13 and His-15. Substrate is bound by residues 15 to 17 (HLR) and Asn-41. Zn(2+) is bound by residues Lys-99, His-136, and His-174. Residue Lys-99 is modified to N6-carboxylysine. His-136 lines the substrate pocket. Leu-219 lines the substrate pocket. Asp-247 contacts Zn(2+). Asp-247 is a catalytic residue. 2 residues coordinate substrate: His-251 and Ala-263.

This sequence belongs to the metallo-dependent hydrolases superfamily. DHOase family. Class II DHOase subfamily. In terms of assembly, homodimer. The cofactor is Zn(2+).

It catalyses the reaction (S)-dihydroorotate + H2O = N-carbamoyl-L-aspartate + H(+). It participates in pyrimidine metabolism; UMP biosynthesis via de novo pathway; (S)-dihydroorotate from bicarbonate: step 3/3. Its function is as follows. Catalyzes the reversible cyclization of carbamoyl aspartate to dihydroorotate. The protein is Dihydroorotase of Acinetobacter baumannii (strain SDF).